We begin with the raw amino-acid sequence, 273 residues long: Putative phosphoenolpyruvate synthase regulatory protein (273 aa).

Residue 153-160 (GVSRCGKT) coordinates ADP.

It belongs to the pyruvate, phosphate/water dikinase regulatory protein family. PSRP subfamily.

It carries out the reaction [pyruvate, water dikinase] + ADP = [pyruvate, water dikinase]-phosphate + AMP + H(+). The catalysed reaction is [pyruvate, water dikinase]-phosphate + phosphate + H(+) = [pyruvate, water dikinase] + diphosphate. Functionally, bifunctional serine/threonine kinase and phosphorylase involved in the regulation of the phosphoenolpyruvate synthase (PEPS) by catalyzing its phosphorylation/dephosphorylation. In Yersinia enterocolitica serotype O:8 / biotype 1B (strain NCTC 13174 / 8081), this protein is Putative phosphoenolpyruvate synthase regulatory protein.